A 507-amino-acid chain; its full sequence is RNA-splicing ligase RtcB homolog (507 aa).

Positions 121, 124, 229, 261, and 355 each coordinate Mn(2+). 228 to 232 (NHYAE) is a binding site for GMP. Residues 355–356 (HN), 404–407 (GGTM), serine 411, 430–433 (HGAG), and lysine 506 contribute to the GMP site. Histidine 430 (GMP-histidine intermediate) is an active-site residue.

This sequence belongs to the RtcB family. Catalytic component of the tRNA-splicing ligase complex. Mn(2+) is required as a cofactor.

The catalysed reaction is a 3'-end 3'-phospho-ribonucleotide-RNA + a 5'-end dephospho-ribonucleoside-RNA + GTP = a ribonucleotidyl-ribonucleotide-RNA + GMP + diphosphate. It catalyses the reaction a 3'-end 2',3'-cyclophospho-ribonucleotide-RNA + a 5'-end dephospho-ribonucleoside-RNA + GTP + H2O = a ribonucleotidyl-ribonucleotide-RNA + GMP + diphosphate + H(+). Catalytic subunit of the tRNA-splicing ligase complex that acts by directly joining spliced tRNA halves to mature-sized tRNAs by incorporating the precursor-derived splice junction phosphate into the mature tRNA as a canonical 3',5'-phosphodiester. May act as an RNA ligase with broad substrate specificity, and may function toward other RNAs. This is RNA-splicing ligase RtcB homolog from Plasmodium yoelii yoelii.